The primary structure comprises 226 residues: 3-dehydroquinate dehydratase (226 aa).

Residues serine 21, 42-44, and arginine 70 each bind 3-dehydroquinate; that span reads EVR. Histidine 124 (proton donor/acceptor) is an active-site residue. Lysine 149 (schiff-base intermediate with substrate) is an active-site residue. Positions 187, 206, and 210 each coordinate 3-dehydroquinate.

The protein belongs to the type-I 3-dehydroquinase family. In terms of assembly, homodimer.

The catalysed reaction is 3-dehydroquinate = 3-dehydroshikimate + H2O. Its pathway is metabolic intermediate biosynthesis; chorismate biosynthesis; chorismate from D-erythrose 4-phosphate and phosphoenolpyruvate: step 3/7. Functionally, involved in the third step of the chorismate pathway, which leads to the biosynthesis of aromatic amino acids. Catalyzes the cis-dehydration of 3-dehydroquinate (DHQ) and introduces the first double bond of the aromatic ring to yield 3-dehydroshikimate. The chain is 3-dehydroquinate dehydratase from Methanothrix thermoacetophila (strain DSM 6194 / JCM 14653 / NBRC 101360 / PT) (Methanosaeta thermophila).